Consider the following 500-residue polypeptide: Signal transduction histidine-protein kinase/phosphatase UhpB (500 aa).

Helical transmembrane passes span 8–28, 78–98, 112–132, 140–160, 185–205, 207–224, 231–249, and 253–273; these read LITVVACFFIFSAAWFCLWSI, VALAHLPLLMIGSVLTLLPVA, LLLQGAALTAAALLQSLPWLG, ALLLTLTGGLTLAPICLVFWH, HLIWYLLLFIVSLWLQLGLPA, LSRFTPFCLALPIIALAW, ALIATLMNAIALIASQTWH, and VDLLLSLLAQSLTGLLLGAGI. The Cytoplasmic portion of the chain corresponds to 274 to 500; that stretch reads QRLRELNQSL…VSVSLPQRYV (227 aa). Positions 311–499 constitute a Histidine kinase domain; that stretch reads ELHDDIGQTI…RVSVSLPQRY (189 aa). Residue His313 is modified to Phosphohistidine; by autocatalysis.

Autophosphorylated.

The protein localises to the cell inner membrane. The enzyme catalyses ATP + protein L-histidine = ADP + protein N-phospho-L-histidine.. In terms of biological role, part of the UhpABC signaling cascade that controls the expression of the hexose phosphate transporter UhpT. UhpB functions as a membrane-associated protein kinase that autophosphorylates in response to interaction with UhpC, and subsequently transfers its phosphate group to the response regulator UhpA. Can also dephosphorylate UhpA. This is Signal transduction histidine-protein kinase/phosphatase UhpB (uhpB) from Salmonella typhimurium (strain LT2 / SGSC1412 / ATCC 700720).